Consider the following 827-residue polypeptide: Penicillin-binding protein 1A (827 aa).

Residues 1–18 (MGKKKKKRKSSAFKIILN) are Cytoplasmic-facing. A helical; Signal-anchor for type II membrane protein membrane pass occupies residues 19–39 (VFLSIFLVAGVAFGGIVFAMI). Residues 40–827 (KTAPPLNVQQ…QNHEDNKNKQ (788 aa)) lie on the Extracellular side of the membrane. Residues 57 to 229 (SILYDDKGQY…PSVYYPYSSA (173 aa)) form a transglycosylase region. Catalysis depends on E96, which acts as the Proton donor; for transglycosylase activity. Residues 357 to 641 (ASAVIMDYHN…AARLWGDIMK (285 aa)) form a transpeptidase region. The active-site Acyl-ester intermediate; for transpeptidase activity is the S398. The disordered stretch occupies residues 755–827 (GSLPPTEEKN…QNHEDNKNKQ (73 aa)). Residues 760–790 (TEEKNNSNTRDKNKDKNKDKDKNKNKDKNPS) are compositionally biased toward basic and acidic residues. Residues 791–817 (QDKPNNNNNNNNNDNNNNTKPPENDSN) show a composition bias toward low complexity. Over residues 818–827 (QNHEDNKNKQ) the composition is skewed to basic and acidic residues.

The protein in the N-terminal section; belongs to the glycosyltransferase 51 family. This sequence in the C-terminal section; belongs to the transpeptidase family.

The protein localises to the cell membrane. The catalysed reaction is [GlcNAc-(1-&gt;4)-Mur2Ac(oyl-L-Ala-gamma-D-Glu-L-Lys-D-Ala-D-Ala)](n)-di-trans,octa-cis-undecaprenyl diphosphate + beta-D-GlcNAc-(1-&gt;4)-Mur2Ac(oyl-L-Ala-gamma-D-Glu-L-Lys-D-Ala-D-Ala)-di-trans,octa-cis-undecaprenyl diphosphate = [GlcNAc-(1-&gt;4)-Mur2Ac(oyl-L-Ala-gamma-D-Glu-L-Lys-D-Ala-D-Ala)](n+1)-di-trans,octa-cis-undecaprenyl diphosphate + di-trans,octa-cis-undecaprenyl diphosphate + H(+). It catalyses the reaction Preferential cleavage: (Ac)2-L-Lys-D-Ala-|-D-Ala. Also transpeptidation of peptidyl-alanyl moieties that are N-acyl substituents of D-alanine.. The protein operates within cell wall biogenesis; peptidoglycan biosynthesis. In terms of biological role, cell wall formation. Synthesis of cross-linked peptidoglycan from the lipid intermediates. The enzyme has a penicillin-insensitive transglycosylase N-terminal domain (formation of linear glycan strands) and a penicillin-sensitive transpeptidase C-terminal domain (cross-linking of the peptide subunits). This Clostridium botulinum (strain Langeland / NCTC 10281 / Type F) protein is Penicillin-binding protein 1A (pbpA).